A 157-amino-acid polypeptide reads, in one-letter code: Large ribosomal subunit protein bL20 (157 aa).

Residues 121 to 157 are disordered; that stretch reads TSAPAVSAEAAPKAKAAKKPAAKKAAAKKPVAEEAAK. Positions 122–134 are enriched in low complexity; that stretch reads SAPAVSAEAAPKA. Over residues 135-147 the composition is skewed to basic residues; sequence KAAKKPAAKKAAA.

It belongs to the bacterial ribosomal protein bL20 family.

In terms of biological role, binds directly to 23S ribosomal RNA and is necessary for the in vitro assembly process of the 50S ribosomal subunit. It is not involved in the protein synthesizing functions of that subunit. The polypeptide is Large ribosomal subunit protein bL20 (rplT) (Arthrobacter sp. (strain FB24)).